We begin with the raw amino-acid sequence, 226 residues long: NADH-ubiquinone oxidoreductase 19.3 kDa subunit, mitochondrial (226 aa).

Residues 40-68 (ATGAVAPAGAQHGIARRERREVPLPSQEG) form a disordered region. Residues C101, C102, C166, and C196 each coordinate [4Fe-4S] cluster.

The protein belongs to the complex I 20 kDa subunit family. In terms of assembly, complex I is composed of about 40 different subunits. This is a component of the iron-sulfur (IP) fragment of the enzyme. It depends on [4Fe-4S] cluster as a cofactor.

It localises to the mitochondrion. It carries out the reaction a ubiquinone + NADH + 5 H(+)(in) = a ubiquinol + NAD(+) + 4 H(+)(out). In terms of biological role, core subunit of the mitochondrial membrane respiratory chain NADH dehydrogenase (Complex I) that is believed to belong to the minimal assembly required for catalysis. Complex I functions in the transfer of electrons from NADH to the respiratory chain. The immediate electron acceptor for the enzyme is believed to be ubiquinone. In Neurospora crassa (strain ATCC 24698 / 74-OR23-1A / CBS 708.71 / DSM 1257 / FGSC 987), this protein is NADH-ubiquinone oxidoreductase 19.3 kDa subunit, mitochondrial.